We begin with the raw amino-acid sequence, 407 residues long: Probable NADPH dehydrogenase (407 aa).

FMN contacts are provided by Thr49 and Gln124. 201 to 204 (HGAH) contacts substrate. The active-site Proton donor is Tyr206. 2 residues coordinate FMN: Arg254 and Arg357.

The protein belongs to the NADH:flavin oxidoreductase/NADH oxidase family. The cofactor is FMN.

It catalyses the reaction A + NADPH + H(+) = AH2 + NADP(+). In terms of biological role, oxidoreductase that binds mammalian estrogens with high affinity. The sequence is that of Probable NADPH dehydrogenase from Candida albicans (Yeast).